A 287-amino-acid polypeptide reads, in one-letter code: ATP synthase gamma chain (287 aa).

This sequence belongs to the ATPase gamma chain family. F-type ATPases have 2 components, CF(1) - the catalytic core - and CF(0) - the membrane proton channel. CF(1) has five subunits: alpha(3), beta(3), gamma(1), delta(1), epsilon(1). CF(0) has three main subunits: a, b and c.

Its subcellular location is the cell inner membrane. Produces ATP from ADP in the presence of a proton gradient across the membrane. The gamma chain is believed to be important in regulating ATPase activity and the flow of protons through the CF(0) complex. In Salmonella gallinarum (strain 287/91 / NCTC 13346), this protein is ATP synthase gamma chain.